Consider the following 116-residue polypeptide: Calcium-regulated OB-fold protein CarO (116 aa).

The first 21 residues, 1–21 (MKLRHLPLIAAIGLFSTVTLA), serve as a signal peptide directing secretion.

The protein localises to the periplasm. In terms of biological role, plays a role in intracellular Ca(2+) homeostasis. Involved in cell protection against oxidative stress in strain 25W. The polypeptide is Calcium-regulated OB-fold protein CarO (Pseudomonas aeruginosa (strain ATCC 15692 / DSM 22644 / CIP 104116 / JCM 14847 / LMG 12228 / 1C / PRS 101 / PAO1)).